Reading from the N-terminus, the 427-residue chain is MACARPLISVYSEKGESSGKNVTLPAVFKAPIRPDIVNFVHTNLRKNNRQPYAVSELAGHQTSAESWGTGRAVARIPRVRGGGTHRSGQGAFGNMCRGGRMFAPTKTWRRWHRRVNTTQKRYAICSALAASALPALVMSKGHSIEEVPELPLVVEDKVEGYKKTKEAVLLLKKLKAWNDIKKVYASQRMRAGKGKMRNRRRIQRRGPCIIYNEDNGIIKAFRNIPGITLLNVSKLNILKLAPGGHVGRFCIWTESAFRKLDELYGTWRKAASLKSNYNLPMHKMINTDLSRILKSPEIQRALRAPRKKIHRRVLKKNPLKNLRIMLKLNPYAKTMRWNTILRQARNHKLRVDKAAAAAAALEAKSDEKAAVAGKKPVVGKKGKKVAVGVKKQKKPLVGKKAAATKKPAPEKKSTEKKPTTEEKKPAA.

Position 2 is an N-acetylalanine (Ala-2). At Lys-14 the chain carries N6-acetyllysine. Position 97 is an omega-N-methylarginine (Arg-97). At Lys-106 the chain carries N6-acetyllysine. A Glycyl lysine isopeptide (Lys-Gly) (interchain with G-Cter in SUMO2) cross-link involves residue Lys-239. Lys-259 carries the post-translational modification N6-acetyllysine. Residue Thr-266 is modified to Phosphothreonine. A phosphoserine mark is found at Ser-290 and Ser-295. Arg-300 carries the citrulline modification. Lys-327 is covalently cross-linked (Glycyl lysine isopeptide (Lys-Gly) (interchain with G-Cter in SUMO2)). An N6-acetyllysine mark is found at Lys-333 and Lys-353. Lys-364 carries the N6-acetyllysine; alternate modification. Lys-364 participates in a covalent cross-link: Glycyl lysine isopeptide (Lys-Gly) (interchain with G-Cter in SUMO1); alternate. Ser-365 bears the Phosphoserine mark. The disordered stretch occupies residues 369 to 427 (AAVAGKKPVVGKKGKKVAVGVKKQKKPLVGKKAAATKKPAPEKKSTEKKPTTEEKKPAA). Residues 377 to 397 (VVGKKGKKVAVGVKKQKKPLV) are compositionally biased toward basic residues. A compositionally biased stretch (basic and acidic residues) spans 407-427 (PAPEKKSTEKKPTTEEKKPAA).

The protein belongs to the universal ribosomal protein uL4 family. In terms of assembly, component of the large ribosomal subunit. May bind IPO9 with low affinity. Interacts with RBM3. Citrullinated by PADI4.

The protein resides in the cytoplasm. In terms of biological role, component of the large ribosomal subunit. The ribosome is a large ribonucleoprotein complex responsible for the synthesis of proteins in the cell. The polypeptide is Large ribosomal subunit protein uL4 (RPL4) (Macaca fascicularis (Crab-eating macaque)).